The following is a 229-amino-acid chain: DNA repair protein RecO (229 aa).

The protein belongs to the RecO family.

Involved in DNA repair and RecF pathway recombination. The polypeptide is DNA repair protein RecO (Pseudomonas fluorescens (strain ATCC BAA-477 / NRRL B-23932 / Pf-5)).